The chain runs to 1400 residues: DNA-directed RNA polymerase subunit beta' (1400 aa).

Residues cysteine 71, cysteine 73, cysteine 86, and cysteine 89 each coordinate Zn(2+). Aspartate 462, aspartate 464, and aspartate 466 together coordinate Mg(2+). Zn(2+) contacts are provided by cysteine 811, cysteine 885, cysteine 892, and cysteine 895.

Belongs to the RNA polymerase beta' chain family. The RNAP catalytic core consists of 2 alpha, 1 beta, 1 beta' and 1 omega subunit. When a sigma factor is associated with the core the holoenzyme is formed, which can initiate transcription. Requires Mg(2+) as cofactor. Zn(2+) serves as cofactor.

It carries out the reaction RNA(n) + a ribonucleoside 5'-triphosphate = RNA(n+1) + diphosphate. DNA-dependent RNA polymerase catalyzes the transcription of DNA into RNA using the four ribonucleoside triphosphates as substrates. The chain is DNA-directed RNA polymerase subunit beta' from Brucella melitensis biotype 1 (strain ATCC 23456 / CCUG 17765 / NCTC 10094 / 16M).